Reading from the N-terminus, the 327-residue chain is MRNDIVKIVDRIIQGGRLSEAEGRSILQAGGASLGWVMAGAQQLRETYCGDGVGLCMIVNAKSGHCSEDCRFCAQSSHYHTGAPVFPLKTAEQIVAEAQCADSRGARCFGIVTSGARVLPGAELESILAALREIRETTRIAPSASLGLLDEETARALADAGCVTYHHNLETARSYFPHICTTHDYDQDLETVRVAKAAGMKVCCGGLFGLGETPEQRLELGLTLRELDIDSVPINFLNPVAGTPLADATPLEPMEALKIIALYRYLMPDRHITVCGGRGVTLGDFQSWIFQAGASGMMVGDYLTTAGRQLSDDLRMVTDAGLTYERC.

The region spanning 48 to 278 is the Radical SAM core domain; the sequence is YCGDGVGLCM…DRHITVCGGR (231 aa). 3 residues coordinate [4Fe-4S] cluster: Cys-66, Cys-70, and Cys-73. 2 residues coordinate [2Fe-2S] cluster: Ser-143 and Cys-203.

Belongs to the radical SAM superfamily. Biotin synthase family. As to quaternary structure, homodimer. [4Fe-4S] cluster is required as a cofactor. Requires [2Fe-2S] cluster as cofactor.

The enzyme catalyses (4R,5S)-dethiobiotin + (sulfur carrier)-SH + 2 reduced [2Fe-2S]-[ferredoxin] + 2 S-adenosyl-L-methionine = (sulfur carrier)-H + biotin + 2 5'-deoxyadenosine + 2 L-methionine + 2 oxidized [2Fe-2S]-[ferredoxin]. It functions in the pathway cofactor biosynthesis; biotin biosynthesis; biotin from 7,8-diaminononanoate: step 2/2. Functionally, catalyzes the conversion of dethiobiotin (DTB) to biotin by the insertion of a sulfur atom into dethiobiotin via a radical-based mechanism. This is Biotin synthase from Syntrophotalea carbinolica (strain DSM 2380 / NBRC 103641 / GraBd1) (Pelobacter carbinolicus).